Reading from the N-terminus, the 218-residue chain is Ras-related protein Rab-27B (218 aa).

Threonine 2 bears the N-acetylthreonine mark. Position 16-24 (16-24 (GDSGVGKTT)) interacts with GTP. The Effector region motif lies at 38 to 46 (FITTVGIDF). GTP-binding positions include 74–78 (DTAGQ), 133–136 (NKAD), and 163–165 (SAA). Cysteine 123 and cysteine 188 form a disulfide bridge. A disordered region spans residues 194 to 218 (IPDTVNGGNSGNLDGEKPPEKKCIC). The segment covering 207 to 218 (DGEKPPEKKCIC) has biased composition (basic and acidic residues). 2 S-geranylgeranyl cysteine lipidation sites follow: cysteine 216 and cysteine 218. Cysteine 218 is subject to Cysteine methyl ester.

Belongs to the small GTPase superfamily. Rab family. As to quaternary structure, interacts with SYTL2, SYTL4, MYRIP and MLPH. Interacts with RPH3A and RPH3A. Interacts (GDP-bound form preferentially) with DENND10. In terms of tissue distribution, expressed primarily in testis.

Its subcellular location is the membrane. It is found in the late endosome. It catalyses the reaction GTP + H2O = GDP + phosphate + H(+). Regulated by guanine nucleotide exchange factors (GEFs) which promote the exchange of bound GDP for free GTP, GTPase activating proteins (GAPs) which increase the GTP hydrolysis activity, and GDP dissociation inhibitors which inhibit the dissociation of the nucleotide from the GTPase. Activated by GEFs such as DENND10. In terms of biological role, small GTPase which cycles between active GTP-bound and inactive GDP-bound states. In its active state, binds to a variety of effector proteins to regulate homeostasis of late endocytic pathway, including endosomal positioning, maturation and secretion. Plays a role in NTRK2/TRKB axonal anterograde transport by facilitating the association of NTRK2/TRKB with KLC1. May be involved in targeting uroplakins to urothelial apical membranes. The protein is Ras-related protein Rab-27B (RAB27B) of Homo sapiens (Human).